Here is a 297-residue protein sequence, read N- to C-terminus: Thiosulfate sulfurtransferase (297 aa).

N6-acetyllysine; alternate is present on Lys14. Lys14 is subject to N6-succinyllysine; alternate. Residues Leu25 to Ser143 form the Rhodanese 1 domain. An O-linked (GlcNAc) serine glycan is attached at Ser35. Ser38 is modified (phosphoserine). The residue at position 136 (Lys136) is an N6-acetyllysine; alternate. Residue Lys136 is modified to N6-succinyllysine; alternate. Residues Glu144–Leu159 are hinge. An N6-acetyllysine modification is found at Lys163. A Rhodanese 2 domain is found at Gln173 to Arg288. Residue Lys175 is modified to N6-acetyllysine; alternate. Lys175 carries the N6-succinyllysine; alternate modification. Arg187 is a substrate binding site. Residues Lys219 and Lys224 each carry the N6-acetyllysine; alternate modification. N6-succinyllysine; alternate is present on residues Lys219 and Lys224. Lys236 carries the post-translational modification N6-acetyllysine. The residue at position 237 (Lys237) is an N6-acetyllysine; alternate. Lys237 carries the N6-succinyllysine; alternate modification. The active-site Cysteine persulfide intermediate is Cys248. Lys250 provides a ligand contact to substrate.

In terms of assembly, monomer. Expressed in numerous tissues.

It is found in the mitochondrion matrix. It catalyses the reaction thiosulfate + hydrogen cyanide = thiocyanate + sulfite + 2 H(+). Together with MRPL18, acts as a mitochondrial import factor for the cytosolic 5S rRNA. Only the nascent unfolded cytoplasmic form is able to bind to the 5S rRNA. Formation of iron-sulfur complexes and cyanide detoxification. This chain is Thiosulfate sulfurtransferase (Tst), found in Mus musculus (Mouse).